A 690-amino-acid chain; its full sequence is Glutaminase A (690 aa).

Positions 1–20 are cleaved as a signal peptide; sequence MMHFLSFCLSVASLVSYAGA. Asn-80, Asn-96, Asn-435, Asn-508, Asn-528, Asn-538, and Asn-571 each carry an N-linked (GlcNAc...) asparagine glycan.

It belongs to the fungal glutaminase gtaA family.

The protein localises to the secreted. The catalysed reaction is L-glutamine + H2O = L-glutamate + NH4(+). Its activity is regulated as follows. Activity is inhibited by about 80% in the presence of 18% sodium chloride. In terms of biological role, glutaminase catalyzes the hydrolysis of glutamine to glutamic acid and plays a key role in nitrogen metabolism. Catalyzes the hydrolysis not only of L-glutamine but also of D-glutamine. This Aspergillus oryzae (strain ATCC 42149 / RIB 40) (Yellow koji mold) protein is Glutaminase A.